A 118-amino-acid chain; its full sequence is uncharacterized protein (118 aa).

3 helical membrane-spanning segments follow: residues 6–26 (ILIL…PFMV), 43–63 (ALSC…IHVL), and 84–104 (IFKV…VLVQ).

Belongs to the AzlD/HI_1737/HP1330 family.

It is found in the cell membrane. This is an uncharacterized protein from Helicobacter pylori (strain J99 / ATCC 700824) (Campylobacter pylori J99).